A 207-amino-acid chain; its full sequence is NADH-quinone oxidoreductase subunit C (207 aa).

It belongs to the complex I 30 kDa subunit family. In terms of assembly, NDH-1 is composed of 14 different subunits. Subunits NuoB, C, D, E, F, and G constitute the peripheral sector of the complex.

Its subcellular location is the cell inner membrane. The enzyme catalyses a quinone + NADH + 5 H(+)(in) = a quinol + NAD(+) + 4 H(+)(out). NDH-1 shuttles electrons from NADH, via FMN and iron-sulfur (Fe-S) centers, to quinones in the respiratory chain. The immediate electron acceptor for the enzyme in this species is believed to be ubiquinone. Couples the redox reaction to proton translocation (for every two electrons transferred, four hydrogen ions are translocated across the cytoplasmic membrane), and thus conserves the redox energy in a proton gradient. The sequence is that of NADH-quinone oxidoreductase subunit C from Thermus thermophilus (strain ATCC BAA-163 / DSM 7039 / HB27).